We begin with the raw amino-acid sequence, 304 residues long: Ribosomal RNA small subunit methyltransferase H (304 aa).

S-adenosyl-L-methionine-binding positions include 47 to 49 (GGH), Asp-66, Phe-93, Asp-108, and Gln-115.

The protein belongs to the methyltransferase superfamily. RsmH family.

The protein localises to the cytoplasm. The catalysed reaction is cytidine(1402) in 16S rRNA + S-adenosyl-L-methionine = N(4)-methylcytidine(1402) in 16S rRNA + S-adenosyl-L-homocysteine + H(+). Functionally, specifically methylates the N4 position of cytidine in position 1402 (C1402) of 16S rRNA. This is Ribosomal RNA small subunit methyltransferase H from Prochlorococcus marinus (strain NATL1A).